A 230-amino-acid polypeptide reads, in one-letter code: Exosome complex component Rrp4 (230 aa).

Residues 60-129 enclose the S1 motif domain; that stretch reads NDKVIGKVID…EIKESWLSLK (70 aa). One can recognise a KH domain in the interval 137-195; that stretch reads EEGSIIYIKAPKVPRVIGKAGNMINMIKSETNTKIIVGQNGLIWIDGEPENVDLAINAI.

It belongs to the RRP4 family. As to quaternary structure, component of the archaeal exosome complex. Forms a trimer of Rrp4 and/or Csl4 subunits. The trimer associates with a hexameric ring-like arrangement composed of 3 Rrp41-Rrp42 heterodimers.

It localises to the cytoplasm. Functionally, non-catalytic component of the exosome, which is a complex involved in RNA degradation. Increases the RNA binding and the efficiency of RNA degradation. Confers strong poly(A) specificity to the exosome. In Picrophilus torridus (strain ATCC 700027 / DSM 9790 / JCM 10055 / NBRC 100828 / KAW 2/3), this protein is Exosome complex component Rrp4.